The primary structure comprises 435 residues: Transcriptional enhancer factor TEF-5 (435 aa).

Polar residues predominate over residues 1–12 (MASNSWNASSSP). Positions 1-34 (MASNSWNASSSPGEAREDGPEGLDKGLDNDAEGV) are disordered. The residue at position 2 (alanine 2) is an N-acetylalanine. The segment covering 14–28 (EAREDGPEGLDKGLD) has biased composition (basic and acidic residues). A DNA-binding region (TEA) is located at residues 28-104 (DNDAEGVWSP…QVLARKKVRE (77 aa)). The residue at position 148 (serine 148) is a Phosphoserine. The interval 173–435 (GPSQDIKPFA…QHHVYKLVKD (263 aa)) is transcriptional activation.

Interacts with YAP1 and WWTR1/TAZ. As to expression, preferentially expressed in the placenta.

The protein localises to the nucleus. Its function is as follows. Transcription factor which plays a key role in the Hippo signaling pathway, a pathway involved in organ size control and tumor suppression by restricting proliferation and promoting apoptosis. The core of this pathway is composed of a kinase cascade wherein MST1/MST2, in complex with its regulatory protein SAV1, phosphorylates and activates LATS1/2 in complex with its regulatory protein MOB1, which in turn phosphorylates and inactivates YAP1 oncoprotein and WWTR1/TAZ. Acts by mediating gene expression of YAP1 and WWTR1/TAZ, thereby regulating cell proliferation, migration and epithelial mesenchymal transition (EMT) induction. Binds to multiple functional elements of the human chorionic somatomammotropin-B gene enhancer. The chain is Transcriptional enhancer factor TEF-5 (TEAD3) from Homo sapiens (Human).